The sequence spans 483 residues: Regulatory protein ViaA (483 aa).

This sequence belongs to the ViaA family. Homodimer. Interacts with RavA.

It localises to the cytoplasm. Component of the RavA-ViaA chaperone complex, which may act on the membrane to optimize the function of some of the respiratory chains. ViaA stimulates the ATPase activity of RavA. The polypeptide is Regulatory protein ViaA (Salmonella arizonae (strain ATCC BAA-731 / CDC346-86 / RSK2980)).